The primary structure comprises 323 residues: Acetyl-coenzyme A carboxylase carboxyl transferase subunit alpha 1 (323 aa).

Positions 39–293 constitute a CoA carboxyltransferase C-terminal domain; that stretch reads RLSKKSQQLT…RRALGDSLRQ (255 aa).

It belongs to the AccA family. As to quaternary structure, acetyl-CoA carboxylase is a heterohexamer composed of biotin carboxyl carrier protein (AccB), biotin carboxylase (AccC) and two subunits each of ACCase subunit alpha (AccA) and ACCase subunit beta (AccD).

The protein localises to the cytoplasm. It carries out the reaction N(6)-carboxybiotinyl-L-lysyl-[protein] + acetyl-CoA = N(6)-biotinyl-L-lysyl-[protein] + malonyl-CoA. It functions in the pathway lipid metabolism; malonyl-CoA biosynthesis; malonyl-CoA from acetyl-CoA: step 1/1. In terms of biological role, component of the acetyl coenzyme A carboxylase (ACC) complex. First, biotin carboxylase catalyzes the carboxylation of biotin on its carrier protein (BCCP) and then the CO(2) group is transferred by the carboxyltransferase to acetyl-CoA to form malonyl-CoA. Does not confer resistance to the endogenous polyketide antibiotic thailandamide, does not confer resistance to thailandamide when expressed in S.typhimurium. This Burkholderia thailandensis (strain ATCC 700388 / DSM 13276 / CCUG 48851 / CIP 106301 / E264) protein is Acetyl-coenzyme A carboxylase carboxyl transferase subunit alpha 1.